Consider the following 436-residue polypeptide: GTPase Der (436 aa).

2 EngA-type G domains span residues 4–167 (PVVA…KNIP) and 176–351 (VQFC…ENHS). GTP contacts are provided by residues 10-17 (GRPNVGKS), 57-61 (DTGGI), 119-122 (NKVD), 182-189 (GRPNVGKS), 229-233 (DTAGM), and 294-297 (NKWD). The KH-like domain occupies 352 to 436 (MRVQTNILND…PIRIFARARK (85 aa)).

Belongs to the TRAFAC class TrmE-Era-EngA-EngB-Septin-like GTPase superfamily. EngA (Der) GTPase family. Associates with the 50S ribosomal subunit.

Functionally, GTPase that plays an essential role in the late steps of ribosome biogenesis. The sequence is that of GTPase Der from Bacillus licheniformis (strain ATCC 14580 / DSM 13 / JCM 2505 / CCUG 7422 / NBRC 12200 / NCIMB 9375 / NCTC 10341 / NRRL NRS-1264 / Gibson 46).